We begin with the raw amino-acid sequence, 516 residues long: Katanin p60 ATPase-containing subunit A1 (516 aa).

The disordered stretch occupies residues 75–212; the sequence is GFKSEPAAPE…DEKKFDPAGY (138 aa). Composition is skewed to basic and acidic residues over residues 133–143 and 155–167; these read ARKDPPRRSEP and RGGRGPSDRRGDA. The span at 168-178 shows a compositional bias: gly residues; it reads RSGGGGRGGAR. Over residues 179 to 212 the composition is skewed to basic and acidic residues; it reads GSDKDKNRGGKSDKDKKAPSGEEGDEKKFDPAGY. 274 to 281 lines the ATP pocket; that stretch reads GPPGTGKT.

Belongs to the AAA ATPase family. Katanin p60 subunit A1 subfamily. Can homooligomerize into hexameric rings, which may be promoted by interaction with microtubules. Interacts with KATNB1, which may serve as a targeting subunit.

The protein resides in the cytoplasm. The protein localises to the cytoskeleton. Its subcellular location is the microtubule organizing center. It localises to the centrosome. It is found in the spindle pole. It carries out the reaction n ATP + n H2O + a microtubule = n ADP + n phosphate + (n+1) alpha/beta tubulin heterodimers.. ATPase activity is stimulated by microtubules, which promote homooligomerization. ATP-dependent microtubule severing is stimulated by interaction with KATNB1. Functionally, catalytic subunit of a complex which severs microtubules in an ATP-dependent manner. Microtubule severing may promote rapid reorganization of cellular microtubule arrays and the release of microtubules from the centrosome following nucleation. In mitotic spindles this could allow depolymerization of the microtubule end proximal to the centrosome, and subsequent poleward microtubule flux. The polypeptide is Katanin p60 ATPase-containing subunit A1 (Strongylocentrotus purpuratus (Purple sea urchin)).